Consider the following 202-residue polypeptide: Dephospho-CoA kinase (202 aa).

The region spanning 4-201 (VVALTGGIAS…QKYLAMSRQN (198 aa)) is the DPCK domain. An ATP-binding site is contributed by 12–17 (ASGKTT).

The protein belongs to the CoaE family.

The protein localises to the cytoplasm. It catalyses the reaction 3'-dephospho-CoA + ATP = ADP + CoA + H(+). It functions in the pathway cofactor biosynthesis; coenzyme A biosynthesis; CoA from (R)-pantothenate: step 5/5. In terms of biological role, catalyzes the phosphorylation of the 3'-hydroxyl group of dephosphocoenzyme A to form coenzyme A. This Vibrio cholerae serotype O1 (strain ATCC 39315 / El Tor Inaba N16961) protein is Dephospho-CoA kinase.